The following is a 600-amino-acid chain: Isocitrate dehydrogenase kinase/phosphatase (600 aa).

Residues 335 to 341 (APGIRGM) and lysine 356 contribute to the ATP site. The active site involves aspartate 390.

It belongs to the AceK family.

Its subcellular location is the cytoplasm. It catalyses the reaction L-seryl-[isocitrate dehydrogenase] + ATP = O-phospho-L-seryl-[isocitrate dehydrogenase] + ADP + H(+). Functionally, bifunctional enzyme which can phosphorylate or dephosphorylate isocitrate dehydrogenase (IDH) on a specific serine residue. This is a regulatory mechanism which enables bacteria to bypass the Krebs cycle via the glyoxylate shunt in response to the source of carbon. When bacteria are grown on glucose, IDH is fully active and unphosphorylated, but when grown on acetate or ethanol, the activity of IDH declines drastically concomitant with its phosphorylation. In Bordetella parapertussis (strain 12822 / ATCC BAA-587 / NCTC 13253), this protein is Isocitrate dehydrogenase kinase/phosphatase.